The chain runs to 241 residues: Ribose-5-phosphate isomerase A (241 aa).

Residues 28–31 (TGST), 83–86 (DGAD), and 96–99 (KGGG) contribute to the substrate site. Glutamate 105 acts as the Proton acceptor in catalysis. Lysine 123 is a binding site for substrate.

This sequence belongs to the ribose 5-phosphate isomerase family. In terms of assembly, homodimer.

It catalyses the reaction aldehydo-D-ribose 5-phosphate = D-ribulose 5-phosphate. The protein operates within carbohydrate degradation; pentose phosphate pathway; D-ribose 5-phosphate from D-ribulose 5-phosphate (non-oxidative stage): step 1/1. Catalyzes the reversible conversion of ribose-5-phosphate to ribulose 5-phosphate. This is Ribose-5-phosphate isomerase A from Rhodopseudomonas palustris (strain BisA53).